We begin with the raw amino-acid sequence, 247 residues long: Disease resistance protein BAK6 (247 aa).

Positions 1-24 are cleaved as a signal peptide; that stretch reads MAAVQFAAAGVLTGLLALATLASC. Asparagine 66, asparagine 104, and asparagine 113 each carry an N-linked (GlcNAc...) asparagine glycan. LRR repeat units lie at residues 90–114, 116–138, 139–161, 162–186, 188–210, and 213–237; these read LESLQYMELFGNSLNGSIPSTLGNL, DLISLDLWDNLLTGPIPTTLGSI, STLRYLRLYENNLTGPIPPSFGN, LTSLLELKLHRNSLSGSIPASLGNI, SLQFLKLNENMLTGTVPLEVLSL, and VGNLTELNIARNNLDGTVRSSGLRV. Residues asparagine 150 and asparagine 161 are each glycosylated (N-linked (GlcNAc...) asparagine). Asparagine 215 carries N-linked (GlcNAc...) asparagine glycosylation.

Interacts with WAK17 isoform 1; the interaction is direct. In terms of assembly, (Microbial infection) Interacts with G.zeae CFEM1; the interaction is direct. Interacts with G.zeae CFEMN1; the interaction is direct. Interacts with G.zeae CFEM5; the interaction is direct.

Functionally, contributes to activation of the hypersensitive response, a form of programmed cell death, upon fungal infection. May sense the presence of fungal material and relay the signal to WAK17 isoform 1. This Zea mays (Maize) protein is Disease resistance protein BAK6.